We begin with the raw amino-acid sequence, 299 residues long: Protease HtpX homolog (299 aa).

2 helical membrane-spanning segments follow: residues 19–39 (LFIVLFSLILFAVGYFFVWYF) and 41–61 (WGITGIIFLAIFIVLYNWIAY). His-146 serves as a coordination point for Zn(2+). The active site involves Glu-147. His-150 serves as a coordination point for Zn(2+). 2 helical membrane-spanning segments follow: residues 156–176 (ILLMTVVAIVAGLIILLRDVF) and 198–218 (IILLLIGLILSIIAPIVVLII). Glu-227 contacts Zn(2+).

The protein belongs to the peptidase M48B family. Zn(2+) is required as a cofactor.

The protein resides in the cell membrane. The protein is Protease HtpX homolog of Caldanaerobacter subterraneus subsp. tengcongensis (strain DSM 15242 / JCM 11007 / NBRC 100824 / MB4) (Thermoanaerobacter tengcongensis).